Here is a 1150-residue protein sequence, read N- to C-terminus: Cohesin subunit SCC3 (1150 aa).

A compositionally biased stretch (basic residues) spans 1–12; that stretch reads MTAVRRSTRIRT. The tract at residues 1 to 122 is disordered; the sequence is MTAVRRSTRI…PAYHRSKKDQ (122 aa). Phosphoserine is present on Ser28. Over residues 32-43 the composition is skewed to basic and acidic residues; the sequence is VESDKITAKTQH. Positions 44–72 are enriched in acidic residues; sequence EEEEEQDTGESEESSSEDDYEDQDDDDYV. Basic residues predominate over residues 77 to 87; it reads AKRKSRKRKPK. The stretch at 305–349 forms a coiled coil; that stretch reads LTQQAVNLEKNYLAKLSKQLSLEEKKKRPNNKTLEKLESTIAETQ. An SCD domain is found at 367 to 457; sequence FVHRYKDVSD…ERFKTKILEV (91 aa). Ser628 is modified (phosphoserine). Residues 1065-1150 form a disordered region; the sequence is ENPEPNKKNI…IDNSDEITQD (86 aa). Positions 1083–1101 are enriched in basic and acidic residues; sequence QREKAPLQPNSERETDHAN.

The protein belongs to the SCC3 family. Interacts directly with MCD1 in cohesin complex. Cohesin complexes are composed of the SMC1 and SMC3 heterodimer attached via their hinge domain, MCD1 which link them, and IRR1/SCC3, which interacts with MCD1. The cohesin complex also interacts with SCC2, which is required for its association with chromosomes. Interacts with LIN1. Acetylated by ECO1.

The protein localises to the nucleus. It is found in the chromosome. Its subcellular location is the centromere. In terms of biological role, component of cohesin complex, a complex required for the cohesion of sister chromatids after DNA replication. The cohesin complex apparently forms a large proteinaceous ring within which sister chromatids can be trapped. At anaphase, the MCD1/SCC1 subunit of the complex is cleaved and dissociates from chromatin, allowing sister chromatids to segregate. The cohesin complex may also play a role in spindle pole assembly during mitosis. This chain is Cohesin subunit SCC3 (IRR1), found in Saccharomyces cerevisiae (strain ATCC 204508 / S288c) (Baker's yeast).